We begin with the raw amino-acid sequence, 224 residues long: MSEDNFDDEFDGSLPSGPRHPMARRFRGYLPVVVDVETGGFNSATDALLEIAATTVGMDEKGFLFPEHTYFFRIEPFEGANIEPAALEFTGIKLDHPLRMAVQEEAALTEIFRGIRKALKANGCKRAILVGHNSSFDLGFLNAAVARTGIKRNPFHPFSSFDTATLAGLAYGQTVLAKACQAAGMEFDNREAHSARYDTEKTAELFCGIVNRWKEMGGWMDDDD.

The Exonuclease domain maps to 32 to 206 (VVVDVETGGF…YDTEKTAELF (175 aa)). Mg(2+) contacts are provided by D35, E37, H193, and D198. Catalysis depends on H193, which acts as the Proton donor/acceptor.

Belongs to the RNase T family. As to quaternary structure, homodimer. The cofactor is Mg(2+).

Its function is as follows. Trims short 3' overhangs of a variety of RNA species, leaving a one or two nucleotide 3' overhang. Responsible for the end-turnover of tRNA: specifically removes the terminal AMP residue from uncharged tRNA (tRNA-C-C-A). Also appears to be involved in tRNA biosynthesis. The protein is Ribonuclease T of Pseudomonas aeruginosa (strain UCBPP-PA14).